A 654-amino-acid chain; its full sequence is Heat shock 70 kDa protein 2 (654 aa).

Positions Ala-612–Asp-646 are enriched in gly residues. Positions Ala-612–Asp-654 are disordered.

Belongs to the heat shock protein 70 family.

The sequence is that of Heat shock 70 kDa protein 2 (HSP70-2) from Paracoccidioides lutzii (strain ATCC MYA-826 / Pb01) (Paracoccidioides brasiliensis).